We begin with the raw amino-acid sequence, 929 residues long: MTKKRKRQHDFQKVKLKVGKKKPKLQNATPTNFKTKTIHLPEQLKEDGTLPTNNRKLNIKDLLSQMHHYNAGVKQSALLGLKDLLSQYPFIIDAHLSNILSEVTAVFTDKDANVRLAAVQLLQFLAPKIRAEQISPFFPLVSAHLSSAMTHITEGIQEDSLKVLDILLEQYPALITGRSSILLKNFVELISHQQLSKGLINRDRSQSWILSVNPNRRLTSQQWRLKVLVRLSKFLQALADGSSRLRESEGLQEQKENPHATSNSIFINWKEHANDQQHIQVYENGGSQPNVSSQFRLRYLVGGLSGVDEGLSSTENLKGFIEIIIPLLIECWVEAVPPQLATPVGNGIEREPLQVMQQVLNIISLLWKLSKQQDETHKLESWLRKNYLIDFKHHFMSRFPYVLKEITKHKRKEPNKSIKHCTVLSNNIDHLLLNLTLSDIMVSLANASTLQKDCSWIEMIRKFVTETLEDGSRLNSKQLNRLLGVSWRLMQIQPNREDTETLIKAVYTLYQQRGLILPVRTLLLKFFSKIYQTEELRSCRFRYRSKVLSRWLAGLPLQLAHLGSRNPELSTQLIDIIHTAAARANKELLKSLQATALRIYDPQEGAVVVLPADSQQRLVQLVYFLPSLPADLLSRLSRCCIMGRLSSSLAAMLIGILHMRSSFSGWKYSAKDWLMSDVDYFSFLFSTLTGFSKEELTWLQSLRGVPHVIQTQLSPVLLYLTDLDQFLHHWDVTEAVFHSLLVIPARSQNFDILQSAISKHLVGLTVIPDSTAGCVFGVICKLLDHTCVVSETLLPFLASCCYSLLYFLLTIEKGEAEHLRKRDKLWGVCVSILALLPRVLRLMLQSLRVNRVGPEELPVVGQLLRLLLQHAPLRTHMLTNAILVQQIIKNITTLKSGSVQEQWLTDLHYCFNVYITGHPQGPSALATVY.

Phosphothreonine is present on Thr-29. The stretch at 99 to 137 (ILSEVTAVFTDKDANVRLAAVQLLQFLAPKIRAEQISPF) is one HEAT repeat.

This sequence belongs to the IPI1/TEX10 family. Component of some MLL1/MLL complex, at least composed of the core components KMT2A/MLL1, ASH2L, HCFC1/HCF1, WDR5 and RBBP5, as well as the facultative components BACC1, CHD8, E2F6, HSP70, INO80C, KANSL1, LAS1L, MAX, MCRS1, MGA, KAT8/MOF, PELP1, PHF20, PRP31, RING2, RUVB1/TIP49A, RUVB2/TIP49B, SENP3, TAF1, TAF4, TAF6, TAF7, TAF9 and TEX10. Component of the 5FMC complex, at least composed of PELP1, LAS1L, TEX10, WDR18 and SENP3; the complex interacts with methylated CHTOP and ZNF148. Component of the PELP1 complex, composed of at least PELP1, TEX10 and WDR18. The complex interacts with pre-60S ribosome particles.

It is found in the nucleus. The protein localises to the nucleoplasm. It localises to the cytoplasm. Its subcellular location is the nucleolus. Functionally, functions as a component of the Five Friends of Methylated CHTOP (5FMC) complex; the 5FMC complex is recruited to ZNF148 by methylated CHTOP, leading to desumoylation of ZNF148 and subsequent transactivation of ZNF148 target genes. Component of the PELP1 complex involved in the nucleolar steps of 28S rRNA maturation and the subsequent nucleoplasmic transit of the pre-60S ribosomal subunit. The sequence is that of Testis-expressed protein 10 (TEX10) from Homo sapiens (Human).